The following is a 328-amino-acid chain: Phosphate acyltransferase (328 aa).

The protein belongs to the PlsX family. Homodimer. Probably interacts with PlsY.

It localises to the cytoplasm. The enzyme catalyses a fatty acyl-[ACP] + phosphate = an acyl phosphate + holo-[ACP]. It functions in the pathway lipid metabolism; phospholipid metabolism. Catalyzes the reversible formation of acyl-phosphate (acyl-PO(4)) from acyl-[acyl-carrier-protein] (acyl-ACP). This enzyme utilizes acyl-ACP as fatty acyl donor, but not acyl-CoA. The protein is Phosphate acyltransferase of Staphylococcus saprophyticus subsp. saprophyticus (strain ATCC 15305 / DSM 20229 / NCIMB 8711 / NCTC 7292 / S-41).